Consider the following 364-residue polypeptide: RNA polymerase sigma factor SigA (364 aa).

The tract at residues 132-202 (LAEANLRLVV…TRAIADQART (71 aa)) is sigma-70 factor domain-2. The Interaction with polymerase core subunit RpoC signature appears at 156–159 (DLIQ). Positions 211 to 287 (ETINKLIRVQ…DDVIESPVDY (77 aa)) are sigma-70 factor domain-3. The segment at 300–353 (VMDTLTDREENVLRMRFGLDDGRMHTLEDVGKQFKVTRERIRQIEAKAIKKLRH) is sigma-70 factor domain-4. A DNA-binding region (H-T-H motif) is located at residues 326–345 (LEDVGKQFKVTRERIRQIEA).

It belongs to the sigma-70 factor family. RpoD/SigA subfamily. As to quaternary structure, interacts transiently with the RNA polymerase catalytic core.

Its subcellular location is the cytoplasm. In terms of biological role, sigma factors are initiation factors that promote the attachment of RNA polymerase to specific initiation sites and are then released. This sigma factor is the primary sigma factor during exponential growth. This Lactococcus lactis subsp. cremoris (Streptococcus cremoris) protein is RNA polymerase sigma factor SigA.